We begin with the raw amino-acid sequence, 406 residues long: Argininosuccinate synthase (406 aa).

ATP-binding positions include 11–19 (AYSGGLDTS) and Ala-38. Tyr-91 and Ser-96 together coordinate L-citrulline. Gly-121 is an ATP binding site. The L-aspartate site is built by Thr-123, Asn-127, and Asp-128. Asn-127 lines the L-citrulline pocket. Residues Arg-131, Ser-181, Ser-190, Glu-266, and Tyr-278 each coordinate L-citrulline.

This sequence belongs to the argininosuccinate synthase family. Type 1 subfamily. In terms of assembly, homotetramer.

The protein resides in the cytoplasm. The catalysed reaction is L-citrulline + L-aspartate + ATP = 2-(N(omega)-L-arginino)succinate + AMP + diphosphate + H(+). It functions in the pathway amino-acid biosynthesis; L-arginine biosynthesis; L-arginine from L-ornithine and carbamoyl phosphate: step 2/3. The protein is Argininosuccinate synthase of Campylobacter jejuni subsp. jejuni serotype O:23/36 (strain 81-176).